A 361-amino-acid chain; its full sequence is S-adenosylmethionine decarboxylase proenzyme (361 aa).

Catalysis depends on residues E8 and E11. S68 functions as the Schiff-base intermediate with substrate; via pyruvic acid in the catalytic mechanism. S68 bears the Pyruvic acid (Ser); by autocatalysis mark. C82 serves as the catalytic Proton donor; for catalytic activity. Residues S234 and H247 each act as proton acceptor; for processing activity in the active site. Residues 341-361 (SCGSPRSTLHRCWSETENEEE) form a disordered region.

Belongs to the eukaryotic AdoMetDC family. The cofactor is pyruvate. Post-translationally, is synthesized initially as an inactive proenzyme. Formation of the active enzyme involves a self-maturation process in which the active site pyruvoyl group is generated from an internal serine residue via an autocatalytic post-translational modification. Two non-identical subunits are generated from the proenzyme in this reaction, and the pyruvate is formed at the N-terminus of the alpha chain, which is derived from the carboxyl end of the proenzyme. The post-translation cleavage follows an unusual pathway, termed non-hydrolytic serinolysis, in which the side chain hydroxyl group of the serine supplies its oxygen atom to form the C-terminus of the beta chain, while the remainder of the serine residue undergoes an oxidative deamination to produce ammonia and the pyruvoyl group blocking the N-terminus of the alpha chain.

The catalysed reaction is S-adenosyl-L-methionine + H(+) = S-adenosyl 3-(methylsulfanyl)propylamine + CO2. It participates in amine and polyamine biosynthesis; S-adenosylmethioninamine biosynthesis; S-adenosylmethioninamine from S-adenosyl-L-methionine: step 1/1. In Helianthus annuus (Common sunflower), this protein is S-adenosylmethionine decarboxylase proenzyme (SAMDC).